Here is an 88-residue protein sequence, read N- to C-terminus: Small ribosomal subunit protein uS19 (88 aa).

Belongs to the universal ribosomal protein uS19 family.

Functionally, protein S19 forms a complex with S13 that binds strongly to the 16S ribosomal RNA. In Chlamydia muridarum (strain MoPn / Nigg), this protein is Small ribosomal subunit protein uS19 (rpsS).